We begin with the raw amino-acid sequence, 46 residues long: MARYRCCRSRSRCRRRRRRSYRRRRRCCRRRRRRVCCRRYVRCRRR.

It belongs to the protamine P1 family. As to expression, testis.

The protein localises to the nucleus. It is found in the chromosome. Functionally, protamines substitute for histones in the chromatin of sperm during the haploid phase of spermatogenesis. They compact sperm DNA into a highly condensed, stable and inactive complex. The polypeptide is Sperm protamine P1 (PRM1) (Glauconycteris beatrix (Beatrix's bat)).